Reading from the N-terminus, the 86-residue chain is Large ribosomal subunit protein eL30 (86 aa).

It belongs to the eukaryotic ribosomal protein eL30 family.

This chain is Large ribosomal subunit protein eL30 (rpl30e), found in Archaeoglobus fulgidus (strain ATCC 49558 / DSM 4304 / JCM 9628 / NBRC 100126 / VC-16).